Here is a 695-residue protein sequence, read N- to C-terminus: Pre-mRNA-splicing factor clf-1 (695 aa).

HAT repeat units follow at residues 52–84, 86–118, 120–152, 154–185, 187–218, 220–259, 261–295, 305–337, 339–373, 383–419, 421–452, 454–486, 488–522, 524–555, 578–616, and 621–654; these read EYQG…WELE, KEFA…AEIK, RNIN…VMEM, GDIP…LEKR, GEFD…FEEE, GTSD…YEAR, REYE…FEKQ, VILT…LEES, GDVD…LFLF, KDIG…FEIR, GQLT…LEQK, YEFE…LERG, DDLE…FEEE, GEYE…FEIN, EAKA…FEKT, and EDIE…YIFP.

Belongs to the crooked-neck family. As to quaternary structure, associated with the spliceosome.

It localises to the nucleus. Involved in pre-mRNA splicing and cell cycle progression. Required for the spliceosome assembly and initiation of the DNA replication. The chain is Pre-mRNA-splicing factor clf-1 (clf-1) from Neurospora crassa (strain ATCC 24698 / 74-OR23-1A / CBS 708.71 / DSM 1257 / FGSC 987).